Here is a 102-residue protein sequence, read N- to C-terminus: Small ribosomal subunit protein uS10 (102 aa).

This sequence belongs to the universal ribosomal protein uS10 family. As to quaternary structure, part of the 30S ribosomal subunit.

Its function is as follows. Involved in the binding of tRNA to the ribosomes. The sequence is that of Small ribosomal subunit protein uS10 from Symbiobacterium thermophilum (strain DSM 24528 / JCM 14929 / IAM 14863 / T).